The chain runs to 74 residues: Cytochrome b (74 aa).

Residues 34 to 54 (FGSLLAICLVTQILTGLLLAM) traverse the membrane as a helical segment.

Belongs to the cytochrome b family. In terms of assembly, the cytochrome bc1 complex contains 11 subunits: 3 respiratory subunits (MT-CYB, CYC1 and UQCRFS1), 2 core proteins (UQCRC1 and UQCRC2) and 6 low-molecular weight proteins (UQCRH/QCR6, UQCRB/QCR7, UQCRQ/QCR8, UQCR10/QCR9, UQCR11/QCR10 and a cleavage product of UQCRFS1). This cytochrome bc1 complex then forms a dimer. It depends on heme as a cofactor.

The protein localises to the mitochondrion inner membrane. Its function is as follows. Component of the ubiquinol-cytochrome c reductase complex (complex III or cytochrome b-c1 complex) that is part of the mitochondrial respiratory chain. The b-c1 complex mediates electron transfer from ubiquinol to cytochrome c. Contributes to the generation of a proton gradient across the mitochondrial membrane that is then used for ATP synthesis. In Anser caerulescens (Snow goose), this protein is Cytochrome b (MT-CYB).